Here is an 88-residue protein sequence, read N- to C-terminus: Large ribosomal subunit protein bL27 (88 aa).

The disordered stretch occupies residues 1–21; the sequence is MAHKKGASSSRNGRDSAAHRL.

This sequence belongs to the bacterial ribosomal protein bL27 family.

In Mycobacterium ulcerans (strain Agy99), this protein is Large ribosomal subunit protein bL27.